The chain runs to 408 residues: Multidrug resistance protein MdtG (408 aa).

11 consecutive transmembrane segments (helical) span residues 16-36 (LIVAWLGCFLTGAAFSLVMPF), 58-78 (IVFSITFLFSAIASPFWGGLA), 92-112 (LGMGIVMVLMGLAQNIWQFLI), 115-135 (ALLGLLGGFVPNANALIATQV), 146-166 (TLSTGGVSGALLGPMAGGLLA), 173-193 (PVFFITASVLILCFFVTLFCI), 224-244 (LFVTTLIIQVATGSIAPILTL), 256-276 (VAFISGMIASVPGVAALLSAP), 290-310 (ILITALIFSVLLLIPMSYVQT), 319-339 (FLLGAADGALLPAVQTLLVYN), and 378-398 (AVFLVTAGVVLFNAVYSWNSL).

Belongs to the major facilitator superfamily. DHA1 family. MdtG (TC 2.A.1.2.20) subfamily.

It is found in the cell inner membrane. Its function is as follows. Confers resistance to fosfomycin and deoxycholate. This chain is Multidrug resistance protein MdtG, found in Escherichia coli O81 (strain ED1a).